We begin with the raw amino-acid sequence, 254 residues long: 4-hydroxy-tetrahydrodipicolinate reductase (254 aa).

NAD(+) contacts are provided by residues 8-13 (GASGKM), 87-89 (GTT), and 111-114 (ATNM). Histidine 143 functions as the Proton donor/acceptor in the catalytic mechanism. Residue histidine 144 coordinates (S)-2,3,4,5-tetrahydrodipicolinate. The active-site Proton donor is lysine 147. 153-154 (GT) provides a ligand contact to (S)-2,3,4,5-tetrahydrodipicolinate.

The protein belongs to the DapB family.

The protein resides in the cytoplasm. It carries out the reaction (S)-2,3,4,5-tetrahydrodipicolinate + NAD(+) + H2O = (2S,4S)-4-hydroxy-2,3,4,5-tetrahydrodipicolinate + NADH + H(+). The enzyme catalyses (S)-2,3,4,5-tetrahydrodipicolinate + NADP(+) + H2O = (2S,4S)-4-hydroxy-2,3,4,5-tetrahydrodipicolinate + NADPH + H(+). The protein operates within amino-acid biosynthesis; L-lysine biosynthesis via DAP pathway; (S)-tetrahydrodipicolinate from L-aspartate: step 4/4. In terms of biological role, catalyzes the conversion of 4-hydroxy-tetrahydrodipicolinate (HTPA) to tetrahydrodipicolinate. This Campylobacter curvus (strain 525.92) protein is 4-hydroxy-tetrahydrodipicolinate reductase.